A 953-amino-acid polypeptide reads, in one-letter code: Isoleucine--tRNA ligase (953 aa).

The short motif at 58–68 is the 'HIGH' region element; that stretch reads PYANGFIHLGH. Position 573 (glutamate 573) interacts with L-isoleucyl-5'-AMP. Positions 614–618 match the 'KMSKS' region motif; it reads KMSKS. Lysine 617 provides a ligand contact to ATP. The Zn(2+) site is built by cysteine 916, cysteine 919, cysteine 936, and cysteine 939.

The protein belongs to the class-I aminoacyl-tRNA synthetase family. IleS type 1 subfamily. In terms of assembly, monomer. It depends on Zn(2+) as a cofactor.

The protein localises to the cytoplasm. It catalyses the reaction tRNA(Ile) + L-isoleucine + ATP = L-isoleucyl-tRNA(Ile) + AMP + diphosphate. Catalyzes the attachment of isoleucine to tRNA(Ile). As IleRS can inadvertently accommodate and process structurally similar amino acids such as valine, to avoid such errors it has two additional distinct tRNA(Ile)-dependent editing activities. One activity is designated as 'pretransfer' editing and involves the hydrolysis of activated Val-AMP. The other activity is designated 'posttransfer' editing and involves deacylation of mischarged Val-tRNA(Ile). This is Isoleucine--tRNA ligase from Blochmanniella floridana.